We begin with the raw amino-acid sequence, 440 residues long: Exosome complex component RRP45 (440 aa).

The residue at position 65 (Ser65) is a Phosphoserine. Lys297 bears the N6-acetyllysine; alternate mark. Lys297 is covalently cross-linked (Glycyl lysine isopeptide (Lys-Gly) (interchain with G-Cter in SUMO1); alternate). Lys297 participates in a covalent cross-link: Glycyl lysine isopeptide (Lys-Gly) (interchain with G-Cter in SUMO2); alternate. Ser306 and Ser346 each carry phosphoserine. The tract at residues 341-362 is disordered; sequence EGIENSWGHLEDSEKEDEDEGG. The span at 353–362 shows a compositional bias: acidic residues; that stretch reads SEKEDEDEGG. Phosphoserine occurs at positions 393 and 395. The disordered stretch occupies residues 404–440; it reads EPDKNPKKIRTQTISATQVKAPSKKPVKKRKKKRAAN. The segment covering 425 to 440 has biased composition (basic residues); the sequence is PSKKPVKKRKKKRAAN.

Belongs to the RNase PH family. In terms of assembly, component of the RNA exosome core complex (Exo-9), composed of EXOSC1, EXOSC2, EXOSC3, EXOSC4, EXOSC5, EXOSC6, EXOSC7, EXOSC8 and EXOSC9; within the complex interacts with EXOSC3, EXOSC4, EXOSC5 and DIS3. The catalytically inactive RNA exosome core complex (Exo-9) associates with the catalytic subunit EXOSC10/RRP6. Exo-9 may associate with DIS3 to form the nucleolar exosome complex, or DIS3L to form the cytoplasmic exosome complex. Exo-9 is formed by a hexameric base ring consisting of the heterodimers EXOSC4-EXOSC9, EXOSC5-EXOSC8 and EXOSC6-EXOSC7, and a cap ring consisting of EXOSC1, EXOSC2 and EXOSC3. The RNA exosome complex associates with cofactors C1D/RRP47, MPHOSPH6/MPP6 and MTREX/MTR4. Interacts (via C-terminus region) with SETX (via N-terminus domain); the interaction enhances SETX sumoylation. Interacts with DIS3; the interaction is direct.

It is found in the cytoplasm. Its subcellular location is the nucleus. It localises to the nucleolus. The protein resides in the nucleoplasm. Its function is as follows. Non-catalytic component of the RNA exosome complex which has 3'-&gt;5' exoribonuclease activity and participates in a multitude of cellular RNA processing and degradation events. In the nucleus, the RNA exosome complex is involved in proper maturation of stable RNA species such as rRNA, snRNA and snoRNA, in the elimination of RNA processing by-products and non-coding 'pervasive' transcripts, such as antisense RNA species and promoter-upstream transcripts (PROMPTs), and of mRNAs with processing defects, thereby limiting or excluding their export to the cytoplasm. The RNA exosome may be involved in Ig class switch recombination (CSR) and/or Ig variable region somatic hypermutation (SHM) by targeting AICDA deamination activity to transcribed dsDNA substrates. In the cytoplasm, the RNA exosome complex is involved in general mRNA turnover and specifically degrades inherently unstable mRNAs containing AU-rich elements (AREs) within their 3' untranslated regions, and in RNA surveillance pathways, preventing translation of aberrant mRNAs. It seems to be involved in degradation of histone mRNA. The catalytic inactive RNA exosome core complex of 9 subunits (Exo-9) is proposed to play a pivotal role in the binding and presentation of RNA for ribonucleolysis, and to serve as a scaffold for the association with catalytic subunits and accessory proteins or complexes. EXOSC9 binds to ARE-containing RNAs. The protein is Exosome complex component RRP45 (EXOSC9) of Bos taurus (Bovine).